A 608-amino-acid chain; its full sequence is Bifunctional dihydrofolate reductase-thymidylate synthase (608 aa).

In terms of domain architecture, DHFR spans aspartate 10–lysine 228. Residue isoleucine 14–cysteine 15 participates in substrate binding. Alanine 16 lines the NADP(+) pocket. Residue valine 31 coordinates substrate. An NADP(+)-binding site is contributed by glycine 39–valine 45. Positions 54 and 108 each coordinate substrate. NADP(+) contacts are provided by residues arginine 106–asparagine 108, serine 128–threonine 130, and asparagine 144. Substrate-binding residues include isoleucine 164, tyrosine 170, and threonine 185. An NADP(+)-binding site is contributed by glycine 165 to glutamate 172. The tract at residues tyrosine 322–alanine 608 is thymidylate synthase. Arginine 345 is a dUMP binding site. Residue cysteine 490 is part of the active site. DUMP contacts are provided by residues histidine 491, glutamine 509 to aspartate 513, asparagine 521, and histidine 551 to tyrosine 553.

It in the N-terminal section; belongs to the dihydrofolate reductase family. The protein in the C-terminal section; belongs to the thymidylate synthase family. In terms of assembly, homodimer.

It carries out the reaction (6S)-5,6,7,8-tetrahydrofolate + NADP(+) = 7,8-dihydrofolate + NADPH + H(+). The enzyme catalyses dUMP + (6R)-5,10-methylene-5,6,7,8-tetrahydrofolate = 7,8-dihydrofolate + dTMP. It participates in cofactor biosynthesis; tetrahydrofolate biosynthesis; 5,6,7,8-tetrahydrofolate from 7,8-dihydrofolate: step 1/1. Functionally, bifunctional enzyme. Involved in de novo dTMP biosynthesis. Key enzyme in folate metabolism. Catalyzes an essential reaction for de novo glycine and purine synthesis, DNA precursor synthesis, and for the conversion of dUMP to dTMP. The chain is Bifunctional dihydrofolate reductase-thymidylate synthase from Plasmodium falciparum (isolate K1 / Thailand).